A 299-amino-acid chain; its full sequence is Coenzyme PQQ synthesis protein B (299 aa).

It belongs to the PqqB family.

The protein operates within cofactor biosynthesis; pyrroloquinoline quinone biosynthesis. Its function is as follows. May be involved in the transport of PQQ or its precursor to the periplasm. The polypeptide is Coenzyme PQQ synthesis protein B (Methylorubrum extorquens (strain CM4 / NCIMB 13688) (Methylobacterium extorquens)).